The primary structure comprises 214 residues: Redox-sensing transcriptional repressor Rex (214 aa).

A DNA-binding region (H-T-H motif) is located at residues 17-56 (KYHRYLEELLKSDVDRISSKELSEKIGFTASQIRQDLNCF). 91–96 (GAGNIG) contacts NAD(+).

Belongs to the transcriptional regulatory Rex family. In terms of assembly, homodimer.

It is found in the cytoplasm. Modulates transcription in response to changes in cellular NADH/NAD(+) redox state. This chain is Redox-sensing transcriptional repressor Rex, found in Clostridium acetobutylicum (strain ATCC 824 / DSM 792 / JCM 1419 / IAM 19013 / LMG 5710 / NBRC 13948 / NRRL B-527 / VKM B-1787 / 2291 / W).